Consider the following 869-residue polypeptide: AP-3 complex subunit delta (869 aa).

Ser2 is modified (N-acetylserine). HEAT repeat units lie at residues 33–70 (NFIS…LHGV), 107–142 (SVML…GTHD), 143–179 (LARD…KYHD), 180–216 (AVKV…KDPQ), 218–254 (CLPL…IEPR), 292–329 (AAVK…KHLW), and 330–366 (AVLE…EDNV). Residues 738-869 (ISQDSFNPKR…EQVIIPDFLL (132 aa)) are disordered. Residues 769-780 (ITPQAKTNIQTA) show a composition bias toward polar residues. The segment covering 815 to 830 (QEKEESSRIENHQNSE) has biased composition (basic and acidic residues). Basic residues predominate over residues 831 to 850 (KKKKKKKKKKGEGSSKHKSR).

This sequence belongs to the adaptor complexes large subunit family. As to quaternary structure, adaptor protein complex 3 (AP-3) is a heterotetramer composed of two large adaptins (delta-type subunit and beta-type subunit), a medium adaptin (mu-type subunit) and a small adaptin (sigma-type subunit). Binds to EPSIN2.

Its subcellular location is the cytoplasm. It localises to the golgi apparatus membrane. Its function is as follows. Part of the AP-3 complex, an adaptor-related complex which seems to be clathrin-associated. The complex is associated with the Golgi region as well as more peripheral structures. It facilitates the budding of vesicles from the Golgi membrane and may be directly involved in trafficking to the vacuole. It also function in maintaining the identity of lytic vacuoles and in regulating the transition between storage and lytic vacuoles. The polypeptide is AP-3 complex subunit delta (DELTA-ADR) (Arabidopsis thaliana (Mouse-ear cress)).